A 465-amino-acid chain; its full sequence is Protein hedgehog (465 aa).

Cys79 carries the N-palmitoyl cysteine lipid modification. 7 residues coordinate Ca(2+): Glu143, Glu144, Asp149, Thr179, Glu180, Asp183, and Asp185. Gly251 carries the Cholesterol glycine ester lipid modification.

This sequence belongs to the hedgehog family. In terms of assembly, interacts with shf. Post-translationally, the C-terminal part of the hedgehog protein precursor displays an autoproteolysis activity that results in the cleavage of the full-length protein into two parts (N-product and C-product). In addition, the C-terminal part displays a cholesterol transferase activity that results by the covalent attachment of a cholesterol moiety to the C-terminal of the newly generated N-product. The N-product is the active species in both local and long-range signaling, whereas the C-product has no signaling activity. In terms of processing, cholesterylation is required for N-product targeting to lipid rafts and multimerization. N-palmitoylation by Rasp of the hedgehog N-product, within the secretory pathway, is required for the embryonic and larval patterning activities of the hedgehog signal.

Its subcellular location is the nucleus. It localises to the cytoplasm. The protein resides in the cell membrane. It catalyses the reaction glycyl-L-cysteinyl-[protein] + cholesterol + H(+) = [protein]-C-terminal glycyl cholesterol ester + N-terminal L-cysteinyl-[protein]. In terms of biological role, the C-terminal part of the hedgehog protein precursor displays an autoproteolysis activity that results in the cleavage of the full-length protein into two parts (N-product and C-product). In addition, the C-terminal part displays a cholesterol transferase activity that results by the covalent attachment of a cholesterol moiety to the C-terminal of the newly generated N-product. Once cleaved, the C-product has no signaling activity and diffuses from the cell. The dually lipidated hedgehog protein N-product is a morphogen which is essential for a variety of patterning events during development. Establishes the anterior-posterior axis of the embryonic segments and patterns the larval imaginal disks. Binds to the patched (ptc) receptor, which functions in association with smoothened (smo), to activate the transcription of target genes wingless (wg), decapentaplegic (dpp) and ptc. In the absence of hh, ptc represses the constitutive signaling activity of smo through fused (fu). Essential component of a signaling pathway which regulates the Duox-dependent gut immune response to bacterial uracil; required to activate Cad99C-dependent endosome formation, norpA-dependent Ca2+ mobilization and p38 MAPK, which are essential steps in the Duox-dependent production of reactive oxygen species (ROS) in response to intestinal bacterial infection. During photoreceptor differentiation, it up-regulates transcription of Ubr3, which in turn promotes the hh-signaling pathway by mediating the ubiquitination and degradation of cos. The polypeptide is Protein hedgehog (Drosophila erecta (Fruit fly)).